Consider the following 526-residue polypeptide: Glutamate--cysteine ligase (526 aa).

It belongs to the glutamate--cysteine ligase type 1 family. Type 1 subfamily.

The catalysed reaction is L-cysteine + L-glutamate + ATP = gamma-L-glutamyl-L-cysteine + ADP + phosphate + H(+). It participates in sulfur metabolism; glutathione biosynthesis; glutathione from L-cysteine and L-glutamate: step 1/2. The protein is Glutamate--cysteine ligase of Shewanella amazonensis (strain ATCC BAA-1098 / SB2B).